Reading from the N-terminus, the 24-residue chain is Glutathione S-transferase (24 aa).

Belongs to the GST superfamily. As to quaternary structure, monomer and homodimer.

The protein resides in the cytoplasm. The catalysed reaction is RX + glutathione = an S-substituted glutathione + a halide anion + H(+). Functionally, conjugation of reduced glutathione to a wide number of exogenous and endogenous hydrophobic electrophiles. This chain is Glutathione S-transferase, found in Pseudomonas sp. (strain CF600).